The sequence spans 807 residues: Zinc finger protein 594 (807 aa).

The interval 1–23 (MKEWKSKMEISEEKKSARAASEK) is disordered. 8 consecutive C2H2-type zinc fingers follow at residues 127 to 149 (YECK…QRIH), 155 to 177 (YVCN…QRIH), 183 to 205 (YICH…KQIH), 211 to 233 (YECK…QRIH), 239 to 261 (YLCN…HRIH), 267 to 289 (YECY…QRIH), 295 to 317 (LKCN…QRLH), and 323 to 345 (YECH…QRLH). Residues 348–370 (EKIEECEKTFSKDEELREEQRIH) form a C2H2-type 9; degenerate zinc finger. C2H2-type zinc fingers lie at residues 376–398 (YWCN…QVTH), 404–426 (YECK…HRIH), 432–454 (CVCS…HRVH), 460–482 (YECS…QKIH), 488–510 (YQCT…RRIH), and 516–538 (YECK…QSLH). The C2H2-type 16; degenerate zinc-finger motif lies at 543-562 (LECEKTFSQDEELRGEQKIH). 6 consecutive C2H2-type zinc fingers follow at residues 568–590 (YWCN…QVTH), 596–618 (YECK…HRIH), 624–646 (YVCN…HRIH), 652–674 (YECS…QKIH), 680–702 (YQCS…RRLH), and 708–730 (YECK…QRLH). The C2H2-type 23; degenerate zinc-finger motif lies at 733–755 (EKLEECEKTFSKDEELRKEQRTH). Residues 761–783 (YWCNQCSRTFQGSSDLIRHQVTH) form a C2H2-type 24 zinc finger.

This sequence belongs to the krueppel C2H2-type zinc-finger protein family.

It is found in the nucleus. Functionally, may be involved in transcriptional regulation. In Homo sapiens (Human), this protein is Zinc finger protein 594 (ZNF594).